An 817-amino-acid chain; its full sequence is Neurabin-2 (817 aa).

Disordered stretches follow at residues 1 to 52 (MMKT…KYGS) and 64 to 163 (MGTT…GGDK). 2 actin-binding regions span residues 1–154 (MMKT…FERS) and 164–282 (EAVA…QHRV). Residue Ser-15 is modified to Phosphoserine; by MAPK1. At Ser-17 the chain carries Phosphoserine; by CDK5. Ser-94 is subject to Phosphoserine; by PKA. A phosphoserine mark is found at Ser-100 and Ser-116. Residues 100-371 (SLNENVDHSA…LERGVDNGRA (272 aa)) form an interaction with D(2) dopamine receptor region. A compositionally biased stretch (pro residues) spans 131–141 (SAQPAPPPHPP). Positions 169 to 255 (RLLRQERAGL…KRSRVFQPPP (87 aa)) are interaction with ADRA2A, ADRA2B and ADRA2C. Residue Ser-192 is modified to Phosphoserine. The residue at position 193 (Thr-193) is a Phosphothreonine. Residue Ser-205 is modified to Phosphoserine; by MAPK1. Thr-207 carries the post-translational modification Phosphothreonine. Positions 216-451 (EKADSRTGLH…DPAPSRKIHF (236 aa)) are disordered. A compositionally biased stretch (basic and acidic residues) spans 290-301 (KPREVRKIKPVE). Low complexity-rich tracts occupy residues 332–341 (STPATTASPA) and 399–409 (SGLGEDSGGSA). Residues 410–425 (LEEDDEEDEEDGEPPY) show a composition bias toward acidic residues. The interval 417–494 (DEEDGEPPYE…LEKRVERLEL (78 aa)) is interaction with protein phosphatase 1. Residue Ser-438 is modified to Phosphoserine. The short motif at 447–451 (RKIHF) is the PP1-binding motif element. An interaction with RGS2 region spans residues 480-525 (SAEYELEKRVERLELFPVELEKDSEGLGISIIGMGAGADMGLEKLG). The 89-residue stretch at 496–584 (PVELEKDSEG…RVRFMIGRER (89 aa)) folds into the PDZ domain. A coiled-coil region spans residues 595–616 (IQQTLEQERWQREMMEQRYAQY). The segment at 595–816 (IQQTLEQERW…NLQTLRNSNS (222 aa)) is interaction with TGN38. Phosphoserine is present on Ser-658. Residues 665 to 816 (EKLVHKFKEL…NLQTLRNSNS (152 aa)) adopt a coiled-coil conformation.

As to quaternary structure, possibly exists as a homodimer, homotrimer or a homotetramer. Interacts with F-actin, PPP1CA, neurabin-1, TGN38 and D(2) dopamine receptor. Interacts with RGS1, RGS2, RGS4, RGS19 and ADRA1B, ADRA2A, ADRA2B, ADRA2C, CDKN2A, PPP1R2, RASGFR1 and TIAM1. Interacts (via C-terminus) with SPATA13 (via C-terminal tail). Interacts with DCLK2. Interacts with ADRA2B. Post-translationally, stimulation of D1 (but not D2) dopamine receptors induces Ser-94 phosphorylation. Dephosphorylation of Ser-94 is mediated mainly by PP1 and to a lesser extent by PP2A. Phosphorylation of spinophilin disrupts its association with F-actin, but does not affect its binding to PP1.

The protein localises to the cytoplasm. It localises to the cytoskeleton. The protein resides in the nucleus. It is found in the postsynaptic density. Its subcellular location is the cell junction. The protein localises to the adherens junction. It localises to the cell projection. The protein resides in the dendritic spine. It is found in the cell membrane. Its subcellular location is the lamellipodium. The protein localises to the filopodium. It localises to the ruffle membrane. Functionally, seems to act as a scaffold protein in multiple signaling pathways. Modulates excitatory synaptic transmission and dendritic spine morphology. Binds to actin filaments (F-actin) and shows cross-linking activity. Binds along the sides of the F-actin. May play an important role in linking the actin cytoskeleton to the plasma membrane at the synaptic junction. Believed to target protein phosphatase 1/PP1 to dendritic spines, which are rich in F-actin, and regulates its specificity toward ion channels and other substrates, such as AMPA-type and NMDA-type glutamate receptors. Plays a role in regulation of G-protein coupled receptor signaling, including dopamine D2 receptors and alpha-adrenergic receptors. May establish a signaling complex for dopaminergic neurotransmission through D2 receptors by linking receptors downstream signaling molecules and the actin cytoskeleton. Binds to ADRA1B and RGS2 and mediates regulation of ADRA1B signaling. May confer to Rac signaling specificity by binding to both, RacGEFs and Rac effector proteins. Probably regulates p70 S6 kinase activity by forming a complex with TIAM1. Required for hepatocyte growth factor (HGF)-induced cell migration. The protein is Neurabin-2 (Ppp1r9b) of Mus musculus (Mouse).